The sequence spans 282 residues: Putative phosphoenolpyruvate synthase regulatory protein (282 aa).

ADP is bound at residue 162–169 (GVSRSGKT).

It belongs to the pyruvate, phosphate/water dikinase regulatory protein family. PSRP subfamily.

It carries out the reaction [pyruvate, water dikinase] + ADP = [pyruvate, water dikinase]-phosphate + AMP + H(+). It catalyses the reaction [pyruvate, water dikinase]-phosphate + phosphate + H(+) = [pyruvate, water dikinase] + diphosphate. In terms of biological role, bifunctional serine/threonine kinase and phosphorylase involved in the regulation of the phosphoenolpyruvate synthase (PEPS) by catalyzing its phosphorylation/dephosphorylation. This is Putative phosphoenolpyruvate synthase regulatory protein from Psychrobacter arcticus (strain DSM 17307 / VKM B-2377 / 273-4).